Reading from the N-terminus, the 79-residue chain is uncharacterized protein (79 aa).

A signal peptide spans 1–18 (MQIKNIVAVLATVTAINA). The segment at 24-44 (PNATTPNATQPNATQPNTTLP) is disordered. 4 N-linked (GlcNAc...) asparagine glycosylation sites follow: asparagine 25, asparagine 30, asparagine 35, and asparagine 40. Glycine 55 is lipidated: GPI-anchor amidated glycine. Positions 56-79 (EAVVNTMAAGAFGAAIAAGVAFLF) are cleaved as a propeptide — removed in mature form.

Its subcellular location is the cell membrane. This is an uncharacterized protein from Saccharomyces cerevisiae (strain ATCC 204508 / S288c) (Baker's yeast).